Consider the following 543-residue polypeptide: CTP synthase (543 aa).

The interval 1-265 is amidoligase domain; the sequence is MARYIFITGG…DDEVLAAFAI (265 aa). Serine 13 serves as a coordination point for CTP. A UTP-binding site is contributed by serine 13. 14–19 contacts ATP; that stretch reads SLGKGL. Tyrosine 54 contributes to the L-glutamine binding site. Residue aspartate 71 participates in ATP binding. Residues aspartate 71 and glutamate 139 each contribute to the Mg(2+) site. CTP contacts are provided by residues 146–148, 186–191, and lysine 222; these read DIE and KTKPTQ. Residues 186 to 191 and lysine 222 contribute to the UTP site; that span reads KTKPTQ. 238–240 lines the ATP pocket; that stretch reads RDA. The Glutamine amidotransferase type-1 domain maps to 291–542; that stretch reads TIAIVGKYTG…IEAALVRSRL (252 aa). Residue glycine 353 coordinates L-glutamine. Cysteine 380 serves as the catalytic Nucleophile; for glutamine hydrolysis. L-glutamine-binding positions include 381–384, glutamate 404, and arginine 470; that span reads FGMQ. Active-site residues include histidine 515 and glutamate 517.

It belongs to the CTP synthase family. As to quaternary structure, homotetramer.

The catalysed reaction is UTP + L-glutamine + ATP + H2O = CTP + L-glutamate + ADP + phosphate + 2 H(+). It catalyses the reaction L-glutamine + H2O = L-glutamate + NH4(+). It carries out the reaction UTP + NH4(+) + ATP = CTP + ADP + phosphate + 2 H(+). Its pathway is pyrimidine metabolism; CTP biosynthesis via de novo pathway; CTP from UDP: step 2/2. Allosterically activated by GTP, when glutamine is the substrate; GTP has no effect on the reaction when ammonia is the substrate. The allosteric effector GTP functions by stabilizing the protein conformation that binds the tetrahedral intermediate(s) formed during glutamine hydrolysis. Inhibited by the product CTP, via allosteric rather than competitive inhibition. Functionally, catalyzes the ATP-dependent amination of UTP to CTP with either L-glutamine or ammonia as the source of nitrogen. Regulates intracellular CTP levels through interactions with the four ribonucleotide triphosphates. This chain is CTP synthase, found in Rhodopseudomonas palustris (strain BisB5).